The following is a 578-amino-acid chain: Malonate--CoA ligase ACSF3, mitochondrial (578 aa).

A mitochondrion-targeting transit peptide spans 1 to 19 (MRVGAFLGRSLFSCSHVRG). 205–213 (TSGTTGRPK) is an ATP binding site. The interval 394–413 (QNPRKEGTSYTTHAQGDSTG) is disordered. Residues D459, R473, and K565 each contribute to the ATP site.

This sequence belongs to the ATP-dependent AMP-binding enzyme family.

The protein resides in the mitochondrion. The enzyme catalyses tetracosanoate + ATP + CoA = tetracosanoyl-CoA + AMP + diphosphate. The catalysed reaction is malonate + ATP + CoA = malonyl-CoA + AMP + diphosphate. Catalyzes the initial reaction in intramitochondrial fatty acid synthesis, by activating malonate and methylmalonate, but not acetate, into their respective CoA thioester. May have some preference toward very-long-chain substrates. This is Malonate--CoA ligase ACSF3, mitochondrial from Xenopus laevis (African clawed frog).